Reading from the N-terminus, the 482-residue chain is tRNA sulfurtransferase (482 aa).

Positions 61–165 (LAIRDALTRI…DDRLLLIKGR (105 aa)) constitute a THUMP domain. ATP contacts are provided by residues 183–184 (LI), lysine 265, glycine 287, and glutamine 296. A disulfide bridge links cysteine 344 with cysteine 456. The 79-residue stretch at 404 to 482 (FGPNDVILDI…GFQNVKVYRP (79 aa)) folds into the Rhodanese domain. Cysteine 456 functions as the Cysteine persulfide intermediate in the catalytic mechanism.

Belongs to the ThiI family.

It is found in the cytoplasm. The catalysed reaction is [ThiI sulfur-carrier protein]-S-sulfanyl-L-cysteine + a uridine in tRNA + 2 reduced [2Fe-2S]-[ferredoxin] + ATP + H(+) = [ThiI sulfur-carrier protein]-L-cysteine + a 4-thiouridine in tRNA + 2 oxidized [2Fe-2S]-[ferredoxin] + AMP + diphosphate. It carries out the reaction [ThiS sulfur-carrier protein]-C-terminal Gly-Gly-AMP + S-sulfanyl-L-cysteinyl-[cysteine desulfurase] + AH2 = [ThiS sulfur-carrier protein]-C-terminal-Gly-aminoethanethioate + L-cysteinyl-[cysteine desulfurase] + A + AMP + 2 H(+). Its pathway is cofactor biosynthesis; thiamine diphosphate biosynthesis. In terms of biological role, catalyzes the ATP-dependent transfer of a sulfur to tRNA to produce 4-thiouridine in position 8 of tRNAs, which functions as a near-UV photosensor. Also catalyzes the transfer of sulfur to the sulfur carrier protein ThiS, forming ThiS-thiocarboxylate. This is a step in the synthesis of thiazole, in the thiamine biosynthesis pathway. The sulfur is donated as persulfide by IscS. This chain is tRNA sulfurtransferase, found in Citrobacter koseri (strain ATCC BAA-895 / CDC 4225-83 / SGSC4696).